The following is an 894-amino-acid chain: Translation initiation factor IF-2 (894 aa).

The disordered stretch occupies residues 25–304 (ADAGMNKASS…KPTSMQHGFD (280 aa)). Basic and acidic residues-rich tracts occupy residues 33–44 (SSDHVSDEEKQK), 52–62 (EHGDKSGESEP), 101–174 (STIE…KEMN), 184–239 (AKKE…ENSD), and 247–263 (YARE…EGGA). Residues 283 to 293 (RGGKGRNKGKL) show a composition bias toward basic residues. The 170-residue stretch at 393-562 (PRAPVVTIMG…LLQSEVLELT (170 aa)) folds into the tr-type G domain. A G1 region spans residues 402–409 (GHVDHGKT). 402-409 (GHVDHGKT) serves as a coordination point for GTP. Residues 427-431 (GITQH) are G2. Positions 448–451 (DTPG) are G3. Residues 448–452 (DTPGH) and 502–505 (NKID) each bind GTP. The G4 stretch occupies residues 502-505 (NKID). The interval 538–540 (SAK) is G5.

The protein belongs to the TRAFAC class translation factor GTPase superfamily. Classic translation factor GTPase family. IF-2 subfamily.

It is found in the cytoplasm. In terms of biological role, one of the essential components for the initiation of protein synthesis. Protects formylmethionyl-tRNA from spontaneous hydrolysis and promotes its binding to the 30S ribosomal subunits. Also involved in the hydrolysis of GTP during the formation of the 70S ribosomal complex. This chain is Translation initiation factor IF-2, found in Vibrio campbellii (strain ATCC BAA-1116).